The sequence spans 378 residues: UPF0754 membrane protein BCQ_0944 (378 aa).

A run of 2 helical transmembrane segments spans residues 1-21 and 357-377; these read MNIW…GGFT and YLGA…LLFL.

Belongs to the UPF0754 family.

It is found in the cell membrane. The sequence is that of UPF0754 membrane protein BCQ_0944 from Bacillus cereus (strain Q1).